Consider the following 313-residue polypeptide: MNDLPFTLDQLLILKAIAAQGSFKKAADSLYISQPAVSMQVQNIEKQLNVQLLDRGGRRANLTDAGHLLLRYGDRILALCDETCRALEDLRNLQTGTLIIGASQTTGTYLMPQLISLFRKKYPQIMVQLHVDSTRHICWNVANGQIDIAIIGGEVPLELREILQVTPYADDELALILPCSHPFSQRQEIQKEDLYQLHFIALYASSTIRKVVDNILREHDIHSSRFFIEMELNSIEAIKSAVQSELGAAFVSASAITKELQLGLLHWAKIQNVILNRNLSIVTNPNRYRSKAAEKFSCEILASFQPPTVHPCG.

An HTH lysR-type domain is found at 6–63; that stretch reads FTLDQLLILKAIAAQGSFKKAADSLYISQPAVSMQVQNIEKQLNVQLLDRGGRRANLT. A DNA-binding region (H-T-H motif) is located at residues 23 to 42; it reads FKKAADSLYISQPAVSMQVQ.

It belongs to the LysR transcriptional regulatory family.

The protein localises to the plastid. Its subcellular location is the chloroplast. Trans-acting transcriptional regulator of RuBisCO genes (rbcL and rbcS) expression. This chain is Probable RuBisCO transcriptional regulator (rbcR), found in Chlorokybus atmophyticus (Soil alga).